We begin with the raw amino-acid sequence, 487 residues long: Glucose starvation modulator protein 1 (487 aa).

The disordered stretch occupies residues 1-75 (MSIRFPEIPG…KRLTPQEKKA (75 aa)). The segment covering 59-68 (SFSSSMTKRL) has biased composition (polar residues). The zn(2)-C6 fungal-type DNA-binding region spans 83-111 (CVFCHSKHLQCSHSRPCQNCIKRNLAHEC). The segment covering 122–139 (MSTTEVPAVSGESSSESG) has biased composition (polar residues). Residues 122–158 (MSTTEVPAVSGESSSESGRATGENGSEMGNPPDPQIA) form a disordered region. A PAS domain is found at 348 to 420 (CLLDYENLSR…FRLFESVAVG (73 aa)).

This sequence belongs to the ERT1/acuK family.

The protein localises to the nucleus. Functionally, transcription factor which regulates nonfermentable carbon utilization. This is Glucose starvation modulator protein 1 (GSM1) from Clavispora lusitaniae (strain ATCC 42720) (Yeast).